Reading from the N-terminus, the 432-residue chain is Methylenetetrahydrofolate--tRNA-(uracil-5-)-methyltransferase TrmFO (432 aa).

Residue 7–12 coordinates FAD; the sequence is GGGLAG.

This sequence belongs to the MnmG family. TrmFO subfamily. FAD serves as cofactor.

It is found in the cytoplasm. It carries out the reaction uridine(54) in tRNA + (6R)-5,10-methylene-5,6,7,8-tetrahydrofolate + NADH + H(+) = 5-methyluridine(54) in tRNA + (6S)-5,6,7,8-tetrahydrofolate + NAD(+). It catalyses the reaction uridine(54) in tRNA + (6R)-5,10-methylene-5,6,7,8-tetrahydrofolate + NADPH + H(+) = 5-methyluridine(54) in tRNA + (6S)-5,6,7,8-tetrahydrofolate + NADP(+). In terms of biological role, catalyzes the folate-dependent formation of 5-methyl-uridine at position 54 (M-5-U54) in all tRNAs. The protein is Methylenetetrahydrofolate--tRNA-(uracil-5-)-methyltransferase TrmFO of Coprothermobacter proteolyticus (strain ATCC 35245 / DSM 5265 / OCM 4 / BT).